A 611-amino-acid polypeptide reads, in one-letter code: Ankyrin repeat protein SKIP35 (611 aa).

ANK repeat units follow at residues 292–322, 323–353, 356–384, 385–414, 416–442, and 445–478; these read LFSNSFDPGWASGMSATVIQGLLGMLVEGGA, DNVNQCFLEASRFGSTELVRVLLQIAQRNSL, DVDLALGFASHYCKIGTMKCLVEEGNAIA, FLGPLMRAAERGCMQVVQWFVKRGCRDMEL, LALTAATSSCQVEVAAYLLPRVPPPVL, and LSIEILKAAGERSGGSLQGVEFLLKSDFLGDSTA.

Interacts with SKP1A/ASK1.

In Arabidopsis thaliana (Mouse-ear cress), this protein is Ankyrin repeat protein SKIP35 (SKIP35).